Reading from the N-terminus, the 876-residue chain is MSKSTAEIRQAFLDFFHSKGHQVVSSSSLVPNNDPTLLFTNAGMNQFKDVFLGLDKRNYSRATTSQRCVRAGGKHNDLENVGYTARHHTFFEMLGNFSFGDYFKHDAIQFAWELLTGENWFALPKERLWVTVYETDDEAYEIWEKEVGIPRERIIRIGDNKGAPYASDNFWQMGDTGPCGPCTEIFYDHGDHIWGGPPGSPEEDGDRYIEIWNIVFMQFNRQADGAMEPLPKPSVDTGMGLERIAAVLQHVNSNYDIDLFRTLIEAVAKVTGATDLGNKSLRVIADHIRSCAFLVADGVLPSNENRGYVLRRIIRRAVRHGNMLGAKETFFYKLVGPLIEVMGSAGEELKRQQAQVEQVLKTEEEQFARTLERGLALLDEELAKLQGDTLDGETAFRLYDTYGFPVDLTADVCRERNIKVDEAGFEAAMEEQRRRAREASGFGADYNAMIRVDSASEFKGYDHLELNGKVTALFVDGKAVEVINAGQEAVVVLDQTPFYAESGGQVGDKGELKGAGFTFAVDDTQKYGQAIGHLGKLSAGALKVGDAVQADVDEARRARIRLNHSATHLMHAALRQVLGTHVAQKGSLVSDKVLRFDFSHNEAMKPSEIREVEDLVNAQIRRNLPIETNIMDLDAAKAKGAMALFGEKYDERVRVLSMGDFSTELCGGTHASRTGDIGLFRIISESGTAAGIRRIEAVTGEGAMATVHAQSDRLNDIAHLLKGDSQNLGDKVRAVLERTRQLEKELQQLKDQAAAQESANLSSKAVDLNGVKLLVSELAGIEPKMLRTMVDDLKNQLGSTVIVLATVVEGKVSLIAGVSKDVTDRVKAGELIGMVAQQVGGKGGGRPDMAQAGGTDAAALPAALASVQGWVSAKLQ.

Zn(2+)-binding residues include histidine 564, histidine 568, cysteine 666, and histidine 670.

The protein belongs to the class-II aminoacyl-tRNA synthetase family. Homotetramer. Requires Zn(2+) as cofactor.

It is found in the cytoplasm. The enzyme catalyses tRNA(Ala) + L-alanine + ATP = L-alanyl-tRNA(Ala) + AMP + diphosphate. Catalyzes the attachment of alanine to tRNA(Ala) in a two-step reaction: alanine is first activated by ATP to form Ala-AMP and then transferred to the acceptor end of tRNA(Ala). Also edits incorrectly charged Ser-tRNA(Ala) and Gly-tRNA(Ala) via its editing domain. This chain is Alanine--tRNA ligase, found in Salmonella choleraesuis (strain SC-B67).